The following is a 116-amino-acid chain: Large ribosomal subunit protein bL20 (116 aa).

Belongs to the bacterial ribosomal protein bL20 family.

Its function is as follows. Binds directly to 23S ribosomal RNA and is necessary for the in vitro assembly process of the 50S ribosomal subunit. It is not involved in the protein synthesizing functions of that subunit. In Acaryochloris marina (strain MBIC 11017), this protein is Large ribosomal subunit protein bL20.